Reading from the N-terminus, the 375-residue chain is LIM domain-binding protein 1 (375 aa).

2 disordered regions span residues 248 to 294 (PPAE…TFAL) and 331 to 375 (DAAN…QASQ). The span at 266–282 (SGGSTMSSGGGNTNNSN) shows a compositional bias: low complexity. The 40-residue stretch at 300-339 (DVMVVGEPTLMGGEFGDEDERLITRLENTQFDAANGIDDE) folds into the LIM interaction domain (LID) domain.

This sequence belongs to the LDB family. In terms of assembly, forms homodimers and heterodimers. Interacts with the LIM domain of LIM/homeobox factor lhx1/lim1, and with lhx3/lim3 and lhx5/lim5. Activates lhx1/lim1 by binding. The stoichiometry of lhx1/lim1 and ldb1 is important for their function and an excess of ldb1 can inhibit lhx1/lim1 function. When bound to lhx1/lim1, escapes degradation by rnf12. The N-terminus interacts with the N-terminal region of rnf12. Undergoes rnf12-mediated ubiquitin-proteasome-dependent degradation. Ubiquitously expressed in the early gastrula before localizing to the dorsal region of the vegetal hemisphere, which contains the Spemann organizer. Expressed in the CNS, pronephros and tail bud in neurula and tail-bud stage embryos. Expressed in multiple adult tissues including brain, heart, lung, stomach, intestine, liver, spleen, kidney, ovary, muscle and skin.

The protein localises to the nucleus. In terms of biological role, binds to the LIM domain of a wide variety of LIM domain-containing transcription factors. Acts as a coactivator together with otx2 to stimulate lhx1/lim1-mediated activation of the gsc promoter in the Spemann organizer. Acts synergistically with lhx1/lim1 and ssbp in axis formation. This is LIM domain-binding protein 1 (ldb1) from Xenopus laevis (African clawed frog).